Here is a 256-residue protein sequence, read N- to C-terminus: Thiazole synthase (256 aa).

Lysine 95 functions as the Schiff-base intermediate with DXP in the catalytic mechanism. 1-deoxy-D-xylulose 5-phosphate-binding positions include glycine 156, 182 to 183 (AG), and 204 to 205 (NT).

It belongs to the ThiG family. As to quaternary structure, homotetramer. Forms heterodimers with either ThiH or ThiS.

The protein localises to the cytoplasm. It carries out the reaction [ThiS sulfur-carrier protein]-C-terminal-Gly-aminoethanethioate + 2-iminoacetate + 1-deoxy-D-xylulose 5-phosphate = [ThiS sulfur-carrier protein]-C-terminal Gly-Gly + 2-[(2R,5Z)-2-carboxy-4-methylthiazol-5(2H)-ylidene]ethyl phosphate + 2 H2O + H(+). The protein operates within cofactor biosynthesis; thiamine diphosphate biosynthesis. Functionally, catalyzes the rearrangement of 1-deoxy-D-xylulose 5-phosphate (DXP) to produce the thiazole phosphate moiety of thiamine. Sulfur is provided by the thiocarboxylate moiety of the carrier protein ThiS. In vitro, sulfur can be provided by H(2)S. The chain is Thiazole synthase from Salmonella enteritidis PT4 (strain P125109).